The following is a 785-amino-acid chain: Endonuclease MutS2 (785 aa).

ATP is bound at residue 335-342; it reads GPNTGGKT. The 76-residue stretch at 710–785 folds into the Smr domain; it reads LDLRGERYED…GNGVTIVEFK (76 aa).

Belongs to the DNA mismatch repair MutS family. MutS2 subfamily. In terms of assembly, homodimer. Binds to stalled ribosomes, contacting rRNA.

Endonuclease that is involved in the suppression of homologous recombination and thus may have a key role in the control of bacterial genetic diversity. In terms of biological role, acts as a ribosome collision sensor, splitting the ribosome into its 2 subunits. Detects stalled/collided 70S ribosomes which it binds and splits by an ATP-hydrolysis driven conformational change. Acts upstream of the ribosome quality control system (RQC), a ribosome-associated complex that mediates the extraction of incompletely synthesized nascent chains from stalled ribosomes and their subsequent degradation. Probably generates substrates for RQC. This chain is Endonuclease MutS2, found in Listeria monocytogenes serotype 4b (strain CLIP80459).